A 359-amino-acid polypeptide reads, in one-letter code: 1-deoxy-D-xylulose 5-phosphate reductoisomerase (359 aa).

NADPH is bound by residues Thr-7, Gly-8, Ser-9, Ile-10, Ala-31, Asn-33, and Asn-111. Lys-112 is a 1-deoxy-D-xylulose 5-phosphate binding site. An NADPH-binding site is contributed by Glu-113. Asp-131 is a binding site for Mn(2+). 1-deoxy-D-xylulose 5-phosphate contacts are provided by Ser-132, Glu-133, Ser-155, and His-178. Glu-133 is a binding site for Mn(2+). Gly-184 provides a ligand contact to NADPH. 1-deoxy-D-xylulose 5-phosphate-binding residues include Ser-191, Asn-196, Lys-197, and Glu-200. Glu-200 serves as a coordination point for Mn(2+).

Belongs to the DXR family. Mg(2+) serves as cofactor. Requires Mn(2+) as cofactor.

It catalyses the reaction 2-C-methyl-D-erythritol 4-phosphate + NADP(+) = 1-deoxy-D-xylulose 5-phosphate + NADPH + H(+). Its pathway is isoprenoid biosynthesis; isopentenyl diphosphate biosynthesis via DXP pathway; isopentenyl diphosphate from 1-deoxy-D-xylulose 5-phosphate: step 1/6. Its function is as follows. Catalyzes the NADPH-dependent rearrangement and reduction of 1-deoxy-D-xylulose-5-phosphate (DXP) to 2-C-methyl-D-erythritol 4-phosphate (MEP). This is 1-deoxy-D-xylulose 5-phosphate reductoisomerase from Campylobacter hominis (strain ATCC BAA-381 / DSM 21671 / CCUG 45161 / LMG 19568 / NCTC 13146 / CH001A).